Reading from the N-terminus, the 178-residue chain is Translation initiation factor IF-3 (178 aa).

This sequence belongs to the IF-3 family. In terms of assembly, monomer.

It localises to the cytoplasm. Functionally, IF-3 binds to the 30S ribosomal subunit and shifts the equilibrium between 70S ribosomes and their 50S and 30S subunits in favor of the free subunits, thus enhancing the availability of 30S subunits on which protein synthesis initiation begins. The polypeptide is Translation initiation factor IF-3 (Ureaplasma parvum serovar 3 (strain ATCC 700970)).